The following is a 274-amino-acid chain: Transmembrane O-methyltransferase (274 aa).

Residues 14 to 34 traverse the membrane as a helical segment; that stretch reads VGTMSPAIALAFLPLVVTLLV. S-adenosyl-L-methionine-binding positions include Glu120, 122-123, Ser128, Glu146, and Ser176; that span reads GT.

The protein belongs to the class I-like SAM-binding methyltransferase superfamily. Cation-dependent O-methyltransferase family. In terms of assembly, interacts with LHFPL5, PCDH15, TMC1, TMC2 and TMIE. Interacts directly with TMC1. The interaction of TOMT with TMC1 and TMC2 is required for the transportation of TMC1/2 into the stereocilia of hair cells.

Its subcellular location is the membrane. It localises to the cytoplasm. The protein resides in the endoplasmic reticulum. It carries out the reaction a catechol + S-adenosyl-L-methionine = a guaiacol + S-adenosyl-L-homocysteine + H(+). In terms of biological role, catalyzes the O-methylation, and thereby the inactivation, of catecholamine neurotransmitters and catechol hormones. Required for auditory function. Component of the cochlear hair cell's mechanotransduction (MET) machinery. Involved in the assembly of the asymmetric tip-link MET complex. Required for transportation of TMC1 and TMC2 proteins into the mechanically sensitive stereocilia of the hair cells. The function in MET is independent of the enzymatic activity. In Propithecus coquereli (Coquerel's sifaka), this protein is Transmembrane O-methyltransferase.